We begin with the raw amino-acid sequence, 99 residues long: NADH-quinone oxidoreductase subunit K 1 (99 aa).

3 consecutive transmembrane segments (helical) span residues 3–23, 28–48, and 59–79; these read PVNY…GVLV, IVVF…LVTF, and IVAF…LAII.

It belongs to the complex I subunit 4L family. NDH-1 is composed of 14 different subunits. Subunits NuoA, H, J, K, L, M, N constitute the membrane sector of the complex.

It localises to the cell membrane. It catalyses the reaction a quinone + NADH + 5 H(+)(in) = a quinol + NAD(+) + 4 H(+)(out). NDH-1 shuttles electrons from NADH, via FMN and iron-sulfur (Fe-S) centers, to quinones in the respiratory chain. The immediate electron acceptor for the enzyme in this species is believed to be a menaquinone. Couples the redox reaction to proton translocation (for every two electrons transferred, four hydrogen ions are translocated across the cytoplasmic membrane), and thus conserves the redox energy in a proton gradient. The sequence is that of NADH-quinone oxidoreductase subunit K 1 from Streptomyces griseus subsp. griseus (strain JCM 4626 / CBS 651.72 / NBRC 13350 / KCC S-0626 / ISP 5235).